The chain runs to 308 residues: uncharacterized protein (308 aa).

The 232-residue stretch at 5 to 236 folds into the ABC transporter domain; it reads LELQQLKKTY…LKSETFILDL (232 aa). Residue 38-45 participates in ATP binding; the sequence is GPNGAGKS.

Belongs to the ABC transporter superfamily.

This is an uncharacterized protein from Escherichia coli (strain K12).